Reading from the N-terminus, the 106-residue chain is Large ribosomal subunit protein uL24 (106 aa).

It belongs to the universal ribosomal protein uL24 family. Part of the 50S ribosomal subunit.

Its function is as follows. One of two assembly initiator proteins, it binds directly to the 5'-end of the 23S rRNA, where it nucleates assembly of the 50S subunit. Functionally, one of the proteins that surrounds the polypeptide exit tunnel on the outside of the subunit. The polypeptide is Large ribosomal subunit protein uL24 (Dechloromonas aromatica (strain RCB)).